The sequence spans 912 residues: Receptor protein kinase WSS1 (912 aa).

A signal peptide spans 1 to 27 (MGRDARRLPLLPFLLLLLAAAAGVAES). Residues 28-477 (ATDAEAIHDL…AGGGKSKPNT (450 aa)) lie on the Extracellular side of the membrane. LRR repeat units lie at residues 64–88 (AGKVTELNLADRGLSGTLPDSLSSL), 89–111 (TSLTALQLQGNALTGAVPSLARM), and 112–134 (GSLARLALDGNAFTSLPPDFLHG). N-linked (GlcNAc...) asparagine glycosylation is found at Asn159, Asn170, Asn196, Asn256, Asn286, Asn371, Asn376, Asn387, and Asn400. LRR repeat units lie at residues 184–208 (LVSLRNLRLSYNNLTGGLPPELSSL), 235–261 (MKSLKLLWIQSNKFTGPIPDLNGTQLE), 281–303 (LMSLKNVSLSNNNFQGPKPAFAA), 364–388 (SSDVSMINLSRKNLSGRISPALANL), 389–411 (TRLARLDLSNNNLTGVIPDVLTT), and 413–438 (PSLTVLNVANNRLTGEVPKFKPSVNV). The interval 448-472 (SSGSSGGGGGSDGDSSSSDSAGGGK) is disordered. A helical transmembrane segment spans residues 478-498 (GMIIGIIVAVIILFACIALLV). At 499-912 (HHRKKKNVEK…SFNVPRKYNG (414 aa)) the chain is on the cytoplasmic side. The Protein kinase domain occupies 580-859 (FSEDCILGRG…HCVNRLSSLV (280 aa)). ATP contacts are provided by residues 586–594 (LGRGGFGVV) and Lys607. Residue Asp708 is the Proton acceptor of the active site.

Belongs to the protein kinase superfamily. Ser/Thr protein kinase family. Mn(2+) is required as a cofactor. Expressed in young and mature leaves.

It localises to the cell membrane. The enzyme catalyses L-seryl-[protein] + ATP = O-phospho-L-seryl-[protein] + ADP + H(+). It carries out the reaction L-threonyl-[protein] + ATP = O-phospho-L-threonyl-[protein] + ADP + H(+). Its function is as follows. Transmembrane kinase receptor involved in the regulation of reactive oxygen species (ROS) homeostasis, chloroplast development and leaf senescence. The polypeptide is Receptor protein kinase WSS1 (Oryza sativa subsp. japonica (Rice)).